The sequence spans 435 residues: Gamma-glutamyl phosphate reductase (435 aa).

This sequence belongs to the gamma-glutamyl phosphate reductase family.

It localises to the cytoplasm. It catalyses the reaction L-glutamate 5-semialdehyde + phosphate + NADP(+) = L-glutamyl 5-phosphate + NADPH + H(+). Its pathway is amino-acid biosynthesis; L-proline biosynthesis; L-glutamate 5-semialdehyde from L-glutamate: step 2/2. Functionally, catalyzes the NADPH-dependent reduction of L-glutamate 5-phosphate into L-glutamate 5-semialdehyde and phosphate. The product spontaneously undergoes cyclization to form 1-pyrroline-5-carboxylate. In Parasynechococcus marenigrum (strain WH8102), this protein is Gamma-glutamyl phosphate reductase.